A 202-amino-acid chain; its full sequence is Translation initiation factor IF-3 (202 aa).

It belongs to the IF-3 family. As to quaternary structure, monomer.

The protein resides in the cytoplasm. Its function is as follows. IF-3 binds to the 30S ribosomal subunit and shifts the equilibrium between 70S ribosomes and their 50S and 30S subunits in favor of the free subunits, thus enhancing the availability of 30S subunits on which protein synthesis initiation begins. In Prochlorococcus marinus (strain NATL2A), this protein is Translation initiation factor IF-3.